Reading from the N-terminus, the 393-residue chain is Histidinol dehydrogenase (393 aa).

Positions 112, 171, and 194 each coordinate NAD(+). Substrate-binding residues include threonine 217, glutamine 239, and histidine 242. Residues glutamine 239 and histidine 242 each coordinate Zn(2+). Residues glutamate 293 and histidine 294 each act as proton acceptor in the active site. 4 residues coordinate substrate: histidine 294, aspartate 326, glutamate 379, and histidine 384. Residue aspartate 326 coordinates Zn(2+). Zn(2+) is bound at residue histidine 384.

The protein belongs to the histidinol dehydrogenase family. Zn(2+) is required as a cofactor.

It catalyses the reaction L-histidinol + 2 NAD(+) + H2O = L-histidine + 2 NADH + 3 H(+). Its pathway is amino-acid biosynthesis; L-histidine biosynthesis; L-histidine from 5-phospho-alpha-D-ribose 1-diphosphate: step 9/9. In terms of biological role, catalyzes the sequential NAD-dependent oxidations of L-histidinol to L-histidinaldehyde and then to L-histidine. The protein is Histidinol dehydrogenase of Sulfolobus acidocaldarius (strain ATCC 33909 / DSM 639 / JCM 8929 / NBRC 15157 / NCIMB 11770).